The sequence spans 488 residues: Mannosylglycerate hydrolase MGH1 (488 aa).

Residues Tyr94, 98 to 101 (WNWD), Tyr146, Gln167, and Gly227 contribute to the substrate site. Asp229 functions as the Proton donor in the catalytic mechanism. Residues Arg262 and 415–416 (YW) contribute to the substrate site. Glu459 functions as the Proton acceptor in the catalytic mechanism.

Belongs to the glycosyl hydrolase 63 family.

The enzyme catalyses (2R)-2-O-(alpha-D-mannosyl)-glycerate + H2O = D-mannose + (R)-glycerate. The catalysed reaction is (2R)-2-O-(alpha-D-glucopyranosyl)-glycerate + H2O = (R)-glycerate + D-glucose. With respect to regulation, activity is not dependent on divalent cations, but it is enhanced by Mn(2+). Functionally, catalyzes the hydrolysis of alpha-D-mannosyl-glycerate (MG) to D-glycerate and D-mannose. Can also hydrolyze alpha-D-glucopyranosyl-glycerate (GG)with lower efficiency. The polypeptide is Mannosylglycerate hydrolase MGH1 (Selaginella moellendorffii (Spikemoss)).